Consider the following 231-residue polypeptide: Nuclear transcription factor Y subunit C-9 (231 aa).

The segment at 211-231 (NPYMGQPMWQQQAPDQPDQEN) is disordered.

It belongs to the NFYC/HAP5 subunit family. Heterotrimeric transcription factor composed of three components, NF-YA, NF-YB and NF-YC. Interacts with NFYA2, NFYB2, CO and RGA. Interacts with REF6 (via N-terminus). In terms of tissue distribution, ubiquitous. Present in etiolated seedlings.

It localises to the nucleus. Its function is as follows. Stimulates the transcription of various genes by recognizing and binding to a CCAAT motif in promoters. Interacts with REF6 to directly regulate SOC1 transcription in response to flowering signals from photoperiod and gibberellic acid pathways. In Arabidopsis thaliana (Mouse-ear cress), this protein is Nuclear transcription factor Y subunit C-9 (NFYC9).